The chain runs to 342 residues: Isopentenyl-diphosphate delta-isomerase (342 aa).

Residue 11 to 12 (RK) participates in substrate binding. FMN-binding positions include S68, 69–71 (SMT), S99, and N127. 99–101 (SMR) is a binding site for substrate. A Mg(2+)-binding site is contributed by E163. FMN-binding positions include K194, T224, and 295–296 (AG).

The protein belongs to the IPP isomerase type 2 family. In terms of assembly, homooctamer. Dimer of tetramers. The cofactor is FMN. It depends on NADPH as a cofactor. Mg(2+) is required as a cofactor.

It is found in the cytoplasm. The catalysed reaction is isopentenyl diphosphate = dimethylallyl diphosphate. Involved in the biosynthesis of isoprenoids. Catalyzes the 1,3-allylic rearrangement of the homoallylic substrate isopentenyl (IPP) to its allylic isomer, dimethylallyl diphosphate (DMAPP). The protein is Isopentenyl-diphosphate delta-isomerase of Rickettsia prowazekii (strain Madrid E).